We begin with the raw amino-acid sequence, 75 residues long: Disintegrin CTF-II (75 aa).

The region spanning 1–75 is the Disintegrin domain; that stretch reads ELLEEGEDCY…SDDCPRWNDL (75 aa). Disulfide bonds link Cys9/Cys24, Cys11/Cys19, Cys18/Cys41, Cys32/Cys38, Cys37/Cys62, and Cys50/Cys69. Positions 54–56 match the Cell attachment site motif; the sequence is RGD.

The protein belongs to the venom metalloproteinase (M12B) family. P-II subfamily. P-IIa sub-subfamily. In terms of assembly, monomer (disintegrin). Expressed by the venom gland.

The protein resides in the secreted. Its function is as follows. Inhibits fibrinogen interaction with platelet receptors, and inhibits aggregation induced by ADP, thrombin, collagen and platelet-activating factor. Acts by binding to the alpha-IIb/beta-3 (ITGA2B/ITGB3) on the platelet surface. The sequence is that of Disintegrin CTF-II from Protobothrops flavoviridis (Habu).